A 127-amino-acid polypeptide reads, in one-letter code: I-Kappa-B like protein J1 (127 aa).

ANK repeat units follow at residues 43-76 (HGNT…DLDE) and 81-111 (DGDT…RFGS).

It belongs to the polydnaviridae I-Kappa-B-like protein family.

Its function is as follows. Suppresses the host immune response through NF-kappa-B inactivation. Possesses ankyrin repeat domains required for NF-kappa-B binding but lacks the regulatory regions required for dissociation from NF-kappa-B and degradation. Therefore, prevents host NF-kappa-B release and subsequent activation. This is I-Kappa-B like protein J1 (J2) from Microplitis demolitor (Parasitoid wasp).